A 178-amino-acid polypeptide reads, in one-letter code: MAELTTLARPYAKAAFEHAQAHQQLANWSAMLGLAAAVSEDGTMQRLLKAPQLTSAEKAAAFIEVCGDKFDAQAQNFIHVAAENDRLLLLPEISALFDLYKAEQEKSVDVEVTSAFALNQEQQDKLAKVLSARLGQEVRLHASEDASLIGGVVIRAGDLVIDGSVRGKIAKLAEALKS.

The protein belongs to the ATPase delta chain family. As to quaternary structure, F-type ATPases have 2 components, F(1) - the catalytic core - and F(0) - the membrane proton channel. F(1) has five subunits: alpha(3), beta(3), gamma(1), delta(1), epsilon(1). F(0) has three main subunits: a(1), b(2) and c(10-14). The alpha and beta chains form an alternating ring which encloses part of the gamma chain. F(1) is attached to F(0) by a central stalk formed by the gamma and epsilon chains, while a peripheral stalk is formed by the delta and b chains.

The protein localises to the cell inner membrane. In terms of biological role, f(1)F(0) ATP synthase produces ATP from ADP in the presence of a proton or sodium gradient. F-type ATPases consist of two structural domains, F(1) containing the extramembraneous catalytic core and F(0) containing the membrane proton channel, linked together by a central stalk and a peripheral stalk. During catalysis, ATP synthesis in the catalytic domain of F(1) is coupled via a rotary mechanism of the central stalk subunits to proton translocation. Functionally, this protein is part of the stalk that links CF(0) to CF(1). It either transmits conformational changes from CF(0) to CF(1) or is implicated in proton conduction. This Pseudomonas entomophila (strain L48) protein is ATP synthase subunit delta.